We begin with the raw amino-acid sequence, 80 residues long: Large ribosomal subunit protein uL24 (80 aa).

Residues 53 to 80 (HMRPTQGQTQGSIIEREFPIHSSNVKKS) are disordered.

The protein belongs to the universal ribosomal protein uL24 family. As to quaternary structure, part of the 50S ribosomal subunit.

Its function is as follows. One of two assembly initiator proteins, it binds directly to the 5'-end of the 23S rRNA, where it nucleates assembly of the 50S subunit. One of the proteins that surrounds the polypeptide exit tunnel on the outside of the subunit. In Pelodictyon phaeoclathratiforme (strain DSM 5477 / BU-1), this protein is Large ribosomal subunit protein uL24.